The primary structure comprises 1332 residues: DNA-directed RNA polymerase subunit beta'' (1332 aa).

Cys220, Cys291, Cys298, and Cys301 together coordinate Zn(2+).

The protein belongs to the RNA polymerase beta' chain family. RpoC2 subfamily. In terms of assembly, in plastids the minimal PEP RNA polymerase catalytic core is composed of four subunits: alpha, beta, beta', and beta''. When a (nuclear-encoded) sigma factor is associated with the core the holoenzyme is formed, which can initiate transcription. The cofactor is Zn(2+).

Its subcellular location is the plastid. The protein localises to the chloroplast. The catalysed reaction is RNA(n) + a ribonucleoside 5'-triphosphate = RNA(n+1) + diphosphate. Functionally, DNA-dependent RNA polymerase catalyzes the transcription of DNA into RNA using the four ribonucleoside triphosphates as substrates. This Lotus japonicus (Lotus corniculatus var. japonicus) protein is DNA-directed RNA polymerase subunit beta''.